Reading from the N-terminus, the 169-residue chain is Cell division protein B3 (169 aa).

Functionally, part of a cell division machinery. May fulfill a coordination function between the Cdv proteins during cell division. The polypeptide is Cell division protein B3 (Sulfolobus acidocaldarius (strain ATCC 33909 / DSM 639 / JCM 8929 / NBRC 15157 / NCIMB 11770)).